Here is a 248-residue protein sequence, read N- to C-terminus: 2,3-bisphosphoglycerate-dependent phosphoglycerate mutase (248 aa).

Residues 8–15, 21–22, Arg60, 87–90, Lys98, 114–115, and 183–184 contribute to the substrate site; these read RHGESEWN, TG, ERHY, RR, and GN. His9 functions as the Tele-phosphohistidine intermediate in the catalytic mechanism. The active-site Proton donor/acceptor is Glu87.

This sequence belongs to the phosphoglycerate mutase family. BPG-dependent PGAM subfamily.

It catalyses the reaction (2R)-2-phosphoglycerate = (2R)-3-phosphoglycerate. It participates in carbohydrate degradation; glycolysis; pyruvate from D-glyceraldehyde 3-phosphate: step 3/5. Catalyzes the interconversion of 2-phosphoglycerate and 3-phosphoglycerate. In Borrelia turicatae (strain 91E135), this protein is 2,3-bisphosphoglycerate-dependent phosphoglycerate mutase.